A 147-amino-acid polypeptide reads, in one-letter code: Nucleoside diphosphate kinase (147 aa).

The ATP site is built by K11, F59, R87, T93, R104, and N114. Catalysis depends on H117, which acts as the Pros-phosphohistidine intermediate.

This sequence belongs to the NDK family. As to quaternary structure, homotetramer. The cofactor is Mg(2+).

The protein resides in the cytoplasm. The catalysed reaction is a 2'-deoxyribonucleoside 5'-diphosphate + ATP = a 2'-deoxyribonucleoside 5'-triphosphate + ADP. It catalyses the reaction a ribonucleoside 5'-diphosphate + ATP = a ribonucleoside 5'-triphosphate + ADP. Its function is as follows. Major role in the synthesis of nucleoside triphosphates other than ATP. The ATP gamma phosphate is transferred to the NDP beta phosphate via a ping-pong mechanism, using a phosphorylated active-site intermediate. The sequence is that of Nucleoside diphosphate kinase from Anaeromyxobacter dehalogenans (strain 2CP-1 / ATCC BAA-258).